A 100-amino-acid polypeptide reads, in one-letter code: Integration host factor subunit alpha (100 aa).

The segment at 54–73 is disordered; sequence DLRDKRQRPGRNPKTGEEIP.

The protein belongs to the bacterial histone-like protein family. In terms of assembly, heterodimer of an alpha and a beta chain.

Functionally, this protein is one of the two subunits of integration host factor, a specific DNA-binding protein that functions in genetic recombination as well as in transcriptional and translational control. This chain is Integration host factor subunit alpha, found in Pseudomonas savastanoi pv. phaseolicola (strain 1448A / Race 6) (Pseudomonas syringae pv. phaseolicola (strain 1448A / Race 6)).